An 841-amino-acid polypeptide reads, in one-letter code: Copper-transporting P-type ATPase (841 aa).

6 helical membrane passes run 186-206 (LWVS…PMLG), 218-238 (ATFI…LPFF), 256-276 (IGLG…APGI), 285-305 (GAAV…VFVG), 445-465 (AVFV…WAAI), and 474-494 (GLLA…GLAT). Residue Asp530 is the 4-aspartylphosphate intermediate of the active site. 2 consecutive transmembrane segments (helical) span residues 602 to 622 (GIAD…DLGI) and 638 to 658 (GKTV…AVAD). Asp729 and Asp733 together coordinate Mg(2+). Helical transmembrane passes span 742–762 (VGIA…ITLV) and 800–820 (VAAG…IAAA).

It belongs to the cation transport ATPase (P-type) (TC 3.A.3) family. Type IB subfamily.

It localises to the cell membrane. The enzyme catalyses Cu(2+)(in) + ATP + H2O = Cu(2+)(out) + ADP + phosphate + H(+). Its function is as follows. Involved in copper efflux. This Rhizobium leguminosarum bv. viciae protein is Copper-transporting P-type ATPase (actP).